A 174-amino-acid polypeptide reads, in one-letter code: NADPH-dependent 7-cyano-7-deazaguanine reductase (174 aa).

Cysteine 72 serves as the catalytic Thioimide intermediate. Aspartate 79 (proton donor) is an active-site residue. Residues 94-96 (VES) and 113-114 (HE) each bind substrate.

It belongs to the GTP cyclohydrolase I family. QueF type 1 subfamily.

The protein resides in the cytoplasm. The enzyme catalyses 7-aminomethyl-7-carbaguanine + 2 NADP(+) = 7-cyano-7-deazaguanine + 2 NADPH + 3 H(+). It functions in the pathway tRNA modification; tRNA-queuosine biosynthesis. Its function is as follows. Catalyzes the NADPH-dependent reduction of 7-cyano-7-deazaguanine (preQ0) to 7-aminomethyl-7-deazaguanine (preQ1). The polypeptide is NADPH-dependent 7-cyano-7-deazaguanine reductase (Synechococcus elongatus (strain ATCC 33912 / PCC 7942 / FACHB-805) (Anacystis nidulans R2)).